A 110-amino-acid chain; its full sequence is MEAKAVSRFVRMSPRKVRLVADEIRGYAVNEALDILKFTNKRAIEPLTKVILSASANASVLNNKVDFNQLFIKKIYVDEGPIMKRFRPRARGRAARIRKRLSHITVVLSD.

This sequence belongs to the universal ribosomal protein uL22 family. Part of the 50S ribosomal subunit.

Functionally, this protein binds specifically to 23S rRNA; its binding is stimulated by other ribosomal proteins, e.g. L4, L17, and L20. It is important during the early stages of 50S assembly. It makes multiple contacts with different domains of the 23S rRNA in the assembled 50S subunit and ribosome. In terms of biological role, the globular domain of the protein is located near the polypeptide exit tunnel on the outside of the subunit, while an extended beta-hairpin is found that lines the wall of the exit tunnel in the center of the 70S ribosome. The polypeptide is Large ribosomal subunit protein uL22 (Leptospira interrogans serogroup Icterohaemorrhagiae serovar copenhageni (strain Fiocruz L1-130)).